A 43-amino-acid polypeptide reads, in one-letter code: Protein PsbN (43 aa).

Residues 7 to 27 form a helical membrane-spanning segment; the sequence is LSIAIGSILLVITGFAIYTAF.

The protein belongs to the PsbN family.

The protein localises to the cellular thylakoid membrane. Functionally, may play a role in photosystem I and II biogenesis. This Crocosphaera subtropica (strain ATCC 51142 / BH68) (Cyanothece sp. (strain ATCC 51142)) protein is Protein PsbN.